The primary structure comprises 765 residues: Palmitoyltransferase ZDHHC8 (765 aa).

The Cytoplasmic segment spans residues 1–13 (MPRSPGTRLKPAK). A helical transmembrane segment spans residues 14 to 34 (YIPVATAAALLVGSSTLFFVF). Residues 35-52 (TCPWLTRAVSPAVPVYNG) lie on the Lumenal side of the membrane. The chain crosses the membrane as a helical span at residues 53–73 (IIFLFVLANFSMATFMDPGVF). Over 74–148 (PRADEDEDKE…NCIGRRNYRY (75 aa)) the chain is Cytoplasmic. Residues 104 to 154 (KWCATCHFYRPPRCSHCSVCDNCVEDFDHHCPWVNNCIGRRNYRYFFLFLL) enclose the DHHC domain. Residue cysteine 134 is the S-palmitoyl cysteine intermediate of the active site. Residues 149 to 169 (FFLFLLSLSAHMVGVVAFGLV) form a helical membrane-spanning segment. Over 170-190 (YVLNHAEGLGAAHTTITMAVM) the chain is Lumenal. The helical transmembrane segment at 191–211 (CVAGLFFIPVIGLTGFHVVLV) threads the bilayer. The Cytoplasmic portion of the chain corresponds to 212-765 (TRGRTTNEQV…VGGTTYEISV (554 aa)). The interval 293–352 (GLGRSKSKGSLDRLDEKPLDLGPPLPPKIEAGTFSSDLQTPRPGSAESALSVQRTSPPTP) is disordered. Positions 301–311 (GSLDRLDEKPL) are enriched in basic and acidic residues. Serine 337 carries the post-translational modification Phosphoserine. Arginine 441 carries the omega-N-methylarginine modification. The interval 509–540 (LHPGATGDPPRPLPRSFSPVLGPRPREPSPVR) is disordered. Phosphoserine occurs at positions 606, 627, 675, 682, 725, and 743. Residues 613–747 (GPGFGGARNP…PGPSASPTRH (135 aa)) are disordered. Over residues 622 to 653 (PALQTSLSSLSSSVSRAPRTSSSSLQADQASS) the composition is skewed to low complexity.

The protein belongs to the DHHC palmitoyltransferase family. ERF2/ZDHHC9 subfamily. As to expression, widely expressed.

The protein resides in the golgi apparatus membrane. The protein localises to the mitochondrion membrane. The enzyme catalyses L-cysteinyl-[protein] + hexadecanoyl-CoA = S-hexadecanoyl-L-cysteinyl-[protein] + CoA. Functionally, palmitoyltransferase that catalyzes the addition of palmitate onto various protein substrates and therefore functions in several unrelated biological processes. Through the palmitoylation of ABCA1 regulates the localization of the transporter to the plasma membrane and thereby regulates its function in cholesterol and phospholipid efflux. Could also pamitoylate the D(2) dopamine receptor DRD2 and regulate its stability and localization to the plasma membrane. Could also play a role in glutamatergic transmission. Its function is as follows. (Microbial infection) Able to palmitoylate SARS coronavirus-2/SARS-CoV-2 spike protein following its synthesis in the endoplasmic reticulum (ER). In the infected cell, promotes spike biogenesis by protecting it from premature ER degradation, increases half-life and controls the lipid organization of its immediate membrane environment. Once the virus has formed, spike palmitoylation controls fusion with the target cell. The sequence is that of Palmitoyltransferase ZDHHC8 from Homo sapiens (Human).